The sequence spans 555 residues: Formate--tetrahydrofolate ligase (555 aa).

Thr-65 to Ser-72 is a binding site for ATP.

Belongs to the formate--tetrahydrofolate ligase family.

The catalysed reaction is (6S)-5,6,7,8-tetrahydrofolate + formate + ATP = (6R)-10-formyltetrahydrofolate + ADP + phosphate. The protein operates within one-carbon metabolism; tetrahydrofolate interconversion. This Staphylococcus aureus (strain Mu3 / ATCC 700698) protein is Formate--tetrahydrofolate ligase.